The primary structure comprises 709 residues: Putative extracellular sulfatase Sulf-1 homolog (709 aa).

The first 27 residues, 1 to 27 (MISNLRISNYFIIFYVLFLIIPIKVTS), serve as a signal peptide directing secretion. Residues Asp-43, Asp-44, and Cys-79 each coordinate Ca(2+). The active-site Nucleophile is Cys-79. Cys-79 carries the 3-oxoalanine (Cys) modification. 3 N-linked (GlcNAc...) asparagine glycosylation sites follow: Asn-103, Asn-162, and Asn-189. 2 residues coordinate Ca(2+): Asp-308 and His-309. N-linked (GlcNAc...) asparagine glycans are attached at residues Asn-344, Asn-468, Asn-500, Asn-540, Asn-566, Asn-610, and Asn-620.

It belongs to the sulfatase family. Requires Ca(2+) as cofactor. The conversion to 3-oxoalanine (also known as C-formylglycine, FGly), of a serine or cysteine residue in prokaryotes and of a cysteine residue in eukaryotes, is critical for catalytic activity.

It localises to the endoplasmic reticulum. It is found in the golgi apparatus. The protein localises to the golgi stack. Its subcellular location is the cell surface. The polypeptide is Putative extracellular sulfatase Sulf-1 homolog (sul-1) (Caenorhabditis elegans).